Reading from the N-terminus, the 162-residue chain is NADH-quinone oxidoreductase subunit I 1 (162 aa).

4Fe-4S ferredoxin-type domains lie at 44–74 (LRTY…VQAA) and 90–119 (YKYQ…LTQE). [4Fe-4S] cluster is bound by residues C54, C57, C60, C64, C99, C102, C105, and C109.

This sequence belongs to the complex I 23 kDa subunit family. In terms of assembly, NDH-1 is composed of 14 different subunits. Subunits NuoA, H, J, K, L, M, N constitute the membrane sector of the complex. The cofactor is [4Fe-4S] cluster.

It localises to the cell membrane. The catalysed reaction is a quinone + NADH + 5 H(+)(in) = a quinol + NAD(+) + 4 H(+)(out). Its function is as follows. NDH-1 shuttles electrons from NADH, via FMN and iron-sulfur (Fe-S) centers, to quinones in the respiratory chain. The immediate electron acceptor for the enzyme in this species is believed to be ubiquinone. Couples the redox reaction to proton translocation (for every two electrons transferred, four hydrogen ions are translocated across the cytoplasmic membrane), and thus conserves the redox energy in a proton gradient. This Symbiobacterium thermophilum (strain DSM 24528 / JCM 14929 / IAM 14863 / T) protein is NADH-quinone oxidoreductase subunit I 1.